We begin with the raw amino-acid sequence, 149 residues long: Large ribosomal subunit protein uL15 (149 aa).

The tract at residues 1–58 (MKLHNLRPAKGGEVKARKRVGRGYGSGLGHNAGRGRDGQNSRSGGGVRPGFEGGQMPL) is disordered. Composition is skewed to gly residues over residues 22-32 (RGYGSGLGHNA) and 43-53 (SGGGVRPGFEG).

It belongs to the universal ribosomal protein uL15 family. Part of the 50S ribosomal subunit.

In terms of biological role, binds to the 23S rRNA. In Finegoldia magna (strain ATCC 29328 / DSM 20472 / WAL 2508) (Peptostreptococcus magnus), this protein is Large ribosomal subunit protein uL15.